The primary structure comprises 425 residues: Glutamyl-tRNA reductase (425 aa).

Substrate-binding positions include 51-54 (TCNR), serine 111, 116-118 (DMQ), and glutamine 122. The active-site Nucleophile is cysteine 52. An NADP(+)-binding site is contributed by 191–196 (GLGEIG).

The protein belongs to the glutamyl-tRNA reductase family. Homodimer.

It carries out the reaction (S)-4-amino-5-oxopentanoate + tRNA(Glu) + NADP(+) = L-glutamyl-tRNA(Glu) + NADPH + H(+). Its pathway is porphyrin-containing compound metabolism; protoporphyrin-IX biosynthesis; 5-aminolevulinate from L-glutamyl-tRNA(Glu): step 1/2. In terms of biological role, catalyzes the NADPH-dependent reduction of glutamyl-tRNA(Glu) to glutamate 1-semialdehyde (GSA). The sequence is that of Glutamyl-tRNA reductase from Cytophaga hutchinsonii (strain ATCC 33406 / DSM 1761 / CIP 103989 / NBRC 15051 / NCIMB 9469 / D465).